The primary structure comprises 199 residues: Glycerol-3-phosphate acyltransferase (199 aa).

5 helical membrane passes run 3–23, 50–70, 78–98, 113–133, and 154–174; these read AAVW…GVLV, WGPA…AVLV, DWML…SVFL, LLFL…SVIL, and LALG…LLIF.

The protein belongs to the PlsY family. As to quaternary structure, probably interacts with PlsX.

The protein resides in the cell inner membrane. It carries out the reaction an acyl phosphate + sn-glycerol 3-phosphate = a 1-acyl-sn-glycero-3-phosphate + phosphate. It participates in lipid metabolism; phospholipid metabolism. In terms of biological role, catalyzes the transfer of an acyl group from acyl-phosphate (acyl-PO(4)) to glycerol-3-phosphate (G3P) to form lysophosphatidic acid (LPA). This enzyme utilizes acyl-phosphate as fatty acyl donor, but not acyl-CoA or acyl-ACP. The polypeptide is Glycerol-3-phosphate acyltransferase (Thermus thermophilus (strain ATCC BAA-163 / DSM 7039 / HB27)).